Here is a 305-residue protein sequence, read N- to C-terminus: GS homeobox 2 (305 aa).

Disordered stretches follow at residues Asp-115–Ala-151 and Lys-259–Leu-305. Basic residues predominate over residues Ser-123–Gln-140. Low complexity predominate over residues Pro-141–Ala-151. The segment at residues Gly-203–Gly-262 is a DNA-binding region (homeobox).

Belongs to the Antp homeobox family.

It localises to the nucleus. In terms of biological role, transcription factor that binds 5'-CNAATTAG-3' DNA sequence and regulates the expression of numerous genes including genes important for brain development. During telencephalic development, causes ventralization of pallial progenitors and, depending on the developmental stage, specifies different neuronal fates. At early stages, necessary and sufficient to correctly specify the ventral lateral ganglionic eminence (LGE) and its major derivatives, the striatal projection neurons. At later stages, may specify LGE progenitors toward dorsal LGE fates, including olfactory bulb interneurons. The polypeptide is GS homeobox 2 (Gsx2) (Mus musculus (Mouse)).